Consider the following 493-residue polypeptide: MALRLYDTLTKEKRAFAPIDPSNVRMYVCGPTVYDFAHIGNARPVIVFDVLFRLLRHLYGENHVTYVRNITDVDDKINDRAARDYPGLPLNEAIRKVTEQTERQFHDDVDALGCLRPTVEPRATEHIGEMRTIIDRLVAGGFAYVAADHVLFSPAAMNAANSVLPRYGALANRSLDEMIAGARVDVAPYKRDATDFVLWKPSKPGEPSWPSPAGITMEGRPGWHIECSAMSWKHLGETFDIHGGGIDLVFPHHENEVAQSCCAFQTDRMAQTWMHNGFLQVEGEKMSKSLGNFITIRELLATEKFGGDSWVGEILRFAMIKTHYRSPIDWTVKALDEGHKVLWDWYRDIGDVGPAQQLPGEFIDCLADDLNISSAIAFMHSLRKDKKFAELLATMNFLGFSNAESVLARRPVGVRINLPPAHAEAAVGTVEVLAKPLSKSEIEERIDARTAARARKDFKESDRIRDELAAMGIAIKDGKDADGKPVTTWEIAR.

Zn(2+) is bound at residue Cys29. A 'HIGH' region motif is present at residues 31–41; that stretch reads PTVYDFAHIGN. 3 residues coordinate Zn(2+): Cys227, His252, and Glu256. The short motif at 285-289 is the 'KMSKS' region element; that stretch reads KMSKS. Lys288 serves as a coordination point for ATP.

Belongs to the class-I aminoacyl-tRNA synthetase family. In terms of assembly, monomer. Requires Zn(2+) as cofactor.

It is found in the cytoplasm. The catalysed reaction is tRNA(Cys) + L-cysteine + ATP = L-cysteinyl-tRNA(Cys) + AMP + diphosphate. In Rhodopseudomonas palustris (strain HaA2), this protein is Cysteine--tRNA ligase.